Here is a 360-residue protein sequence, read N- to C-terminus: Photosystem II protein D1 (360 aa).

3 helical membrane passes run 29 to 46 (YIGW…TATS), 118 to 133 (HFLL…EWEL), and 142 to 156 (WISV…AAAA). Chlorophyll a is bound at residue His118. Tyr126 lines the pheophytin a pocket. Residues Asp170 and Glu189 each contribute to the [CaMn4O5] cluster site. Residues 197-218 (FHQLGVAGVFGGSLFSAMHGSL) form a helical membrane-spanning segment. His198 contributes to the chlorophyll a binding site. Residues His215 and 264-265 (SF) each bind a quinone. Residue His215 coordinates Fe cation. Residue His272 coordinates Fe cation. The chain crosses the membrane as a helical span at residues 274 to 288 (FLGLWPVVGIWFTAM). Residues His332, Glu333, Asp342, and Ala344 each contribute to the [CaMn4O5] cluster site. Positions 345–360 (SSNSLPVSLVAPSVNG) are excised as a propeptide.

This sequence belongs to the reaction center PufL/M/PsbA/D family. In terms of assembly, PSII is composed of 1 copy each of membrane proteins PsbA, PsbB, PsbC, PsbD, PsbE, PsbF, PsbH, PsbI, PsbJ, PsbK, PsbL, PsbM, PsbT, PsbX, PsbY, PsbZ, Psb30/Ycf12, at least 3 peripheral proteins of the oxygen-evolving complex and a large number of cofactors. It forms dimeric complexes. The cofactor is The D1/D2 heterodimer binds P680, chlorophylls that are the primary electron donor of PSII, and subsequent electron acceptors. It shares a non-heme iron and each subunit binds pheophytin, quinone, additional chlorophylls, carotenoids and lipids. D1 provides most of the ligands for the Mn4-Ca-O5 cluster of the oxygen-evolving complex (OEC). There is also a Cl(-1) ion associated with D1 and D2, which is required for oxygen evolution. The PSII complex binds additional chlorophylls, carotenoids and specific lipids.. Post-translationally, tyr-161 forms a radical intermediate that is referred to as redox-active TyrZ, YZ or Y-Z. C-terminally processed by CTPA; processing is essential to allow assembly of the oxygen-evolving complex and thus photosynthetic growth.

The protein localises to the plastid. It is found in the chloroplast thylakoid membrane. It catalyses the reaction 2 a plastoquinone + 4 hnu + 2 H2O = 2 a plastoquinol + O2. Functionally, photosystem II (PSII) is a light-driven water:plastoquinone oxidoreductase that uses light energy to abstract electrons from H(2)O, generating O(2) and a proton gradient subsequently used for ATP formation. It consists of a core antenna complex that captures photons, and an electron transfer chain that converts photonic excitation into a charge separation. The D1/D2 (PsbA/PsbD) reaction center heterodimer binds P680, the primary electron donor of PSII as well as several subsequent electron acceptors. In Gracilaria tenuistipitata var. liui (Red alga), this protein is Photosystem II protein D1.